A 441-amino-acid polypeptide reads, in one-letter code: BTB/POZ domain-containing protein At3g05675 (441 aa).

In terms of domain architecture, BTB spans 20–98 (SDIVVRLRNE…LYVVSDDVHE (79 aa)).

Its pathway is protein modification; protein ubiquitination. May act as a substrate-specific adapter of an E3 ubiquitin-protein ligase complex (CUL3-RBX1-BTB) which mediates the ubiquitination and subsequent proteasomal degradation of target proteins. The polypeptide is BTB/POZ domain-containing protein At3g05675 (Arabidopsis thaliana (Mouse-ear cress)).